The following is a 372-amino-acid chain: MSGPLTERRQMILKLVIQEFVDTATPVASETLVRKYRLPVSSATVRNDMAALEELGFLTHPHTSGGRIPTDAGYRFFVENLMERTTLSPAEQRMIRHQFYQVRGELDQWVQLACAVLARTAHNASVATAPRAEQLRFKSLELIAIHETMALAVIVFHGGIVKQQTLPIEPGRTPEDLRRAAGLVSDLLADATLSRAEELAAIATFNGVPLSEFERTLVDLVVRAMSVFEEQAQEQIYSDGILEMLSQPEFLPASGRDDAERAIERLRRTLEILKSGRGLSPLIPQALASGGVQVIIGGEHSEDTMRDYSVILARYGVEGALVGVLGVIGPTRMAYPRSISTVRYIASLMTNLLADLYHVNTRPSDIEPAAEL.

It belongs to the HrcA family.

Its function is as follows. Negative regulator of class I heat shock genes (grpE-dnaK-dnaJ and groELS operons). Prevents heat-shock induction of these operons. The chain is Heat-inducible transcription repressor HrcA from Chloroflexus aurantiacus (strain ATCC 29366 / DSM 635 / J-10-fl).